We begin with the raw amino-acid sequence, 371 residues long: Putative phosphoserine aminotransferase (371 aa).

Arginine 45 contributes to the L-glutamate binding site. Pyridoxal 5'-phosphate contacts are provided by phenylalanine 103, threonine 149, aspartate 171, and glutamine 194. Lysine 195 carries the N6-(pyridoxal phosphate)lysine modification. Position 246–247 (246–247) interacts with pyridoxal 5'-phosphate; sequence NT.

The protein belongs to the class-V pyridoxal-phosphate-dependent aminotransferase family. SerC subfamily. In terms of assembly, homodimer. Pyridoxal 5'-phosphate is required as a cofactor.

It is found in the cytoplasm. The catalysed reaction is O-phospho-L-serine + 2-oxoglutarate = 3-phosphooxypyruvate + L-glutamate. The enzyme catalyses 4-(phosphooxy)-L-threonine + 2-oxoglutarate = (R)-3-hydroxy-2-oxo-4-phosphooxybutanoate + L-glutamate. Its pathway is amino-acid biosynthesis; L-serine biosynthesis; L-serine from 3-phospho-D-glycerate: step 2/3. The protein operates within cofactor biosynthesis; pyridoxine 5'-phosphate biosynthesis; pyridoxine 5'-phosphate from D-erythrose 4-phosphate: step 3/5. Functionally, catalyzes the reversible conversion of 3-phosphohydroxypyruvate to phosphoserine and of 3-hydroxy-2-oxo-4-phosphonooxybutanoate to phosphohydroxythreonine. The protein is Putative phosphoserine aminotransferase of Mycolicibacterium vanbaalenii (strain DSM 7251 / JCM 13017 / BCRC 16820 / KCTC 9966 / NRRL B-24157 / PYR-1) (Mycobacterium vanbaalenii).